A 976-amino-acid chain; its full sequence is Chitin synthase 3A (976 aa).

The segment at 29-72 (DDANASNRSPVSNPYEPDYDQLSPPPMLGAQRPVPEQNESSRDL) is disordered. Over residues 31–40 (ANASNRSPVS) the composition is skewed to polar residues. N32, N66, N95, and N602 each carry an N-linked (GlcNAc...) asparagine glycan. 7 helical membrane passes run 639–659 (LLNVLFSWFSLAAFYLTTTII), 684–704 (IVNVLIKYIYIAFLVLQFVLA), 717–737 (VLSFMVFGLIQLYLLVLTGYL), 773–793 (LIIIALITIYGLNYIASFLYL), 801–821 (SFPQYLVLMSTYINILMVYAF), 903–923 (TGLVILWLLCNIVLITFVTTD), and 944–964 (FLLYSTGVLSIVRFIGFLWFI).

It belongs to the chitin synthase family. Class III subfamily.

It is found in the cell membrane. The enzyme catalyses [(1-&gt;4)-N-acetyl-beta-D-glucosaminyl](n) + UDP-N-acetyl-alpha-D-glucosamine = [(1-&gt;4)-N-acetyl-beta-D-glucosaminyl](n+1) + UDP + H(+). Functionally, polymerizes chitin, a structural polymer of the cell wall and septum, by transferring the sugar moiety of UDP-GlcNAc to the non-reducing end of the growing chitin polymer. Shows additive effects in septum formation with CHS1, CHS2, CHS4, CHS5, CHS6 and CHS7. Involved in virulence and mediates mycotoxin deoxinivalenol (DON) biosynthesis via the regulation of the expression of TRI4, TRI5 and TRI6. The chain is Chitin synthase 3A from Gibberella zeae (strain ATCC MYA-4620 / CBS 123657 / FGSC 9075 / NRRL 31084 / PH-1) (Wheat head blight fungus).